Consider the following 274-residue polypeptide: 2,3,4,5-tetrahydropyridine-2,6-dicarboxylate N-succinyltransferase (274 aa).

Residues Arg-107 and Asp-144 each contribute to the substrate site.

This sequence belongs to the transferase hexapeptide repeat family. In terms of assembly, homotrimer.

It is found in the cytoplasm. It catalyses the reaction (S)-2,3,4,5-tetrahydrodipicolinate + succinyl-CoA + H2O = (S)-2-succinylamino-6-oxoheptanedioate + CoA. It functions in the pathway amino-acid biosynthesis; L-lysine biosynthesis via DAP pathway; LL-2,6-diaminopimelate from (S)-tetrahydrodipicolinate (succinylase route): step 1/3. In Cereibacter sphaeroides (strain ATCC 17023 / DSM 158 / JCM 6121 / CCUG 31486 / LMG 2827 / NBRC 12203 / NCIMB 8253 / ATH 2.4.1.) (Rhodobacter sphaeroides), this protein is 2,3,4,5-tetrahydropyridine-2,6-dicarboxylate N-succinyltransferase.